We begin with the raw amino-acid sequence, 174 residues long: UPF0316 protein lin1888 (174 aa).

Transmembrane regions (helical) follow at residues Gly-4–Val-24, Leu-36–Leu-56, and Ile-62–Ile-82.

The protein belongs to the UPF0316 family.

The protein resides in the cell membrane. The chain is UPF0316 protein lin1888 from Listeria innocua serovar 6a (strain ATCC BAA-680 / CLIP 11262).